The primary structure comprises 237 residues: Protein UL24 homolog (237 aa).

Belongs to the herpesviridae UL24 family.

The chain is Protein UL24 homolog (20) from Equus caballus (Horse).